A 198-amino-acid chain; its full sequence is FMN-dependent NADH:quinone oxidoreductase (198 aa).

Residue 96–99 coordinates FMN; sequence MYNF.

The protein belongs to the azoreductase type 1 family. As to quaternary structure, homodimer. FMN serves as cofactor.

The enzyme catalyses 2 a quinone + NADH + H(+) = 2 a 1,4-benzosemiquinone + NAD(+). It catalyses the reaction N,N-dimethyl-1,4-phenylenediamine + anthranilate + 2 NAD(+) = 2-(4-dimethylaminophenyl)diazenylbenzoate + 2 NADH + 2 H(+). Functionally, quinone reductase that provides resistance to thiol-specific stress caused by electrophilic quinones. Its function is as follows. Also exhibits azoreductase activity. Catalyzes the reductive cleavage of the azo bond in aromatic azo compounds to the corresponding amines. The protein is FMN-dependent NADH:quinone oxidoreductase of Burkholderia mallei (strain ATCC 23344).